A 339-amino-acid chain; its full sequence is S-adenosylmethionine:tRNA ribosyltransferase-isomerase (339 aa).

This sequence belongs to the QueA family. Monomer.

It is found in the cytoplasm. The catalysed reaction is 7-aminomethyl-7-carbaguanosine(34) in tRNA + S-adenosyl-L-methionine = epoxyqueuosine(34) in tRNA + adenine + L-methionine + 2 H(+). It functions in the pathway tRNA modification; tRNA-queuosine biosynthesis. Its function is as follows. Transfers and isomerizes the ribose moiety from AdoMet to the 7-aminomethyl group of 7-deazaguanine (preQ1-tRNA) to give epoxyqueuosine (oQ-tRNA). In Campylobacter fetus subsp. fetus (strain 82-40), this protein is S-adenosylmethionine:tRNA ribosyltransferase-isomerase.